The primary structure comprises 429 residues: Adenylosuccinate synthetase (429 aa).

GTP-binding positions include 12 to 18 (GDEGKGK) and 40 to 42 (GHT). The active-site Proton acceptor is the D13. Residues D13 and G40 each contribute to the Mg(2+) site. Residues 13 to 16 (DEGK), 38 to 41 (NAGH), T128, R142, Q223, T238, and R302 each bind IMP. H41 acts as the Proton donor in catalysis. Residue 298-304 (TTTGRPR) participates in substrate binding. GTP-binding positions include R304, 330–332 (SID), and 412–414 (SVG).

Belongs to the adenylosuccinate synthetase family. Homodimer. The cofactor is Mg(2+).

Its subcellular location is the cytoplasm. The catalysed reaction is IMP + L-aspartate + GTP = N(6)-(1,2-dicarboxyethyl)-AMP + GDP + phosphate + 2 H(+). Its pathway is purine metabolism; AMP biosynthesis via de novo pathway; AMP from IMP: step 1/2. Functionally, plays an important role in the de novo pathway of purine nucleotide biosynthesis. Catalyzes the first committed step in the biosynthesis of AMP from IMP. This is Adenylosuccinate synthetase from Bacillus cereus (strain ATCC 14579 / DSM 31 / CCUG 7414 / JCM 2152 / NBRC 15305 / NCIMB 9373 / NCTC 2599 / NRRL B-3711).